The sequence spans 506 residues: Putative amidase (506 aa).

Catalysis depends on charge relay system residues Lys121 and Ser196. Ser220 (acyl-ester intermediate) is an active-site residue.

Belongs to the amidase family.

It carries out the reaction a monocarboxylic acid amide + H2O = a monocarboxylate + NH4(+). This is Putative amidase from Synechocystis sp. (strain ATCC 27184 / PCC 6803 / Kazusa).